The sequence spans 515 residues: Maturase K (515 aa).

Belongs to the intron maturase 2 family. MatK subfamily.

The protein resides in the plastid. It is found in the chloroplast. Functionally, usually encoded in the trnK tRNA gene intron. Probably assists in splicing its own and other chloroplast group II introns. The sequence is that of Maturase K from Ceratophyllum demersum (Rigid hornwort).